We begin with the raw amino-acid sequence, 278 residues long: Protein FixR (278 aa).

40-64 (LLTGASRGIGHATAKLFSEAGWRII) provides a ligand contact to NAD(+). A substrate-binding site is contributed by Ser-175. Tyr-189 functions as the Proton acceptor in the catalytic mechanism.

The protein belongs to the short-chain dehydrogenases/reductases (SDR) family.

The sequence is that of Protein FixR (fixR) from Bradyrhizobium diazoefficiens (strain JCM 10833 / BCRC 13528 / IAM 13628 / NBRC 14792 / USDA 110).